Here is a 78-residue protein sequence, read N- to C-terminus: Beta-defensin 12 (78 aa).

The signal sequence occupies residues 1 to 27; sequence MALSRGTFYFGLALFFIVVELPSGSWA. Cystine bridges form between C46-C73, C53-C67, and C57-C74.

This sequence belongs to the beta-defensin family.

It localises to the secreted. Has antibacterial activity. The protein is Beta-defensin 12 (Defb12) of Rattus norvegicus (Rat).